The chain runs to 590 residues: Aspartate--tRNA ligase (590 aa).

L-aspartate is bound at residue Glu-175. The tract at residues 199–202 (QIFK) is aspartate. Residue Arg-221 coordinates L-aspartate. ATP-binding positions include 221-223 (RDE) and Gln-230. His-449 is a binding site for L-aspartate. Glu-483 contacts ATP. Arg-490 contributes to the L-aspartate binding site. 535–538 (GLDR) provides a ligand contact to ATP.

It belongs to the class-II aminoacyl-tRNA synthetase family. Type 1 subfamily. In terms of assembly, homodimer.

It localises to the cytoplasm. It carries out the reaction tRNA(Asp) + L-aspartate + ATP = L-aspartyl-tRNA(Asp) + AMP + diphosphate. In terms of biological role, catalyzes the attachment of L-aspartate to tRNA(Asp) in a two-step reaction: L-aspartate is first activated by ATP to form Asp-AMP and then transferred to the acceptor end of tRNA(Asp). This chain is Aspartate--tRNA ligase, found in Geobacillus kaustophilus (strain HTA426).